We begin with the raw amino-acid sequence, 215 residues long: NADH-quinone oxidoreductase subunit C (215 aa).

The protein belongs to the complex I 30 kDa subunit family. In terms of assembly, NDH-1 is composed of 14 different subunits. Subunits NuoB, C, D, E, F, and G constitute the peripheral sector of the complex.

It localises to the cell inner membrane. The enzyme catalyses a quinone + NADH + 5 H(+)(in) = a quinol + NAD(+) + 4 H(+)(out). Its function is as follows. NDH-1 shuttles electrons from NADH, via FMN and iron-sulfur (Fe-S) centers, to quinones in the respiratory chain. The immediate electron acceptor for the enzyme in this species is believed to be ubiquinone. Couples the redox reaction to proton translocation (for every two electrons transferred, four hydrogen ions are translocated across the cytoplasmic membrane), and thus conserves the redox energy in a proton gradient. The chain is NADH-quinone oxidoreductase subunit C from Francisella philomiragia subsp. philomiragia (strain ATCC 25017 / CCUG 19701 / FSC 153 / O#319-036).